The sequence spans 53 residues: UPF0391 membrane protein Meso_3392 (53 aa).

2 helical membrane-spanning segments follow: residues 4 to 24 (WILI…HSLA) and 33 to 53 (ILIA…IAIA).

It belongs to the UPF0391 family.

It is found in the cell membrane. The sequence is that of UPF0391 membrane protein Meso_3392 from Chelativorans sp. (strain BNC1).